The chain runs to 342 residues: uncharacterized protein (342 aa).

Belongs to the cycloisomerase 2 family.

This is an uncharacterized protein from Staphylococcus epidermidis (strain ATCC 12228 / FDA PCI 1200).